A 206-amino-acid chain; its full sequence is Protein GET1 (206 aa).

At 1–4 (MPSL) the chain is on the lumenal side. Residues 5-24 (LITILLLNIVIYVINTIGAA) traverse the membrane as a helical segment. Over 25 to 110 (TIDSLLWLFY…SFDMTVKSVR (86 aa)) the chain is Cytoplasmic. Residues 42–99 (SHMAREQRRLKREVIQLKREMNATSSQDEFAKWAKLRRRHDKALETYEAKNNELTQCK) adopt a coiled-coil conformation. Residues 111-131 (WAATSGLMLFLQFWYSKRPIF) traverse the membrane as a helical segment. The Lumenal segment spans residues 132–155 (TLPPGWIPWQVQWVLSFPRAPMGT). Residues 156-172 (VSIQIWGGACATVVALV) form a helical membrane-spanning segment. Residues 173–206 (GDAVGATMGFVSASKKEGMKVGAGVGEKEGKKSQ) lie on the Cytoplasmic side of the membrane.

This sequence belongs to the WRB/GET1 family. In terms of assembly, interacts with GET3.

The protein resides in the endoplasmic reticulum membrane. In terms of biological role, required for the post-translational delivery of tail-anchored (TA) proteins to the endoplasmic reticulum. Acts as a membrane receptor for soluble GET3, which recognizes and selectively binds the transmembrane domain of TA proteins in the cytosol. The chain is Protein GET1 from Ajellomyces dermatitidis (strain ER-3 / ATCC MYA-2586) (Blastomyces dermatitidis).